We begin with the raw amino-acid sequence, 284 residues long: Probable sulfate transport system permease protein cysT (284 aa).

Transmembrane regions (helical) follow at residues Ala25–Leu45, Ser75–Val95, Ala107–Val127, Val145–Val165, Phe194–Phe214, Ser223–Phe243, and Thr255–Ile275. The ABC transmembrane type-1 domain occupies Tyr69 to Ile272.

The protein belongs to the binding-protein-dependent transport system permease family. CysTW subfamily.

The protein resides in the plastid. The protein localises to the chloroplast membrane. In terms of biological role, part of the ABC transporter complex cysAWTP (TC 3.A.1.6.1) involved in sulfate/thiosulfate import. Probably responsible for the translocation of the substrate across the membrane. In Nephroselmis olivacea (Green alga), this protein is Probable sulfate transport system permease protein cysT (cysT).